The chain runs to 317 residues: SVP1-like protein 2 (317 aa).

WD repeat units lie at residues Ala119–Glu159 and Val164–Tyr203.

The protein belongs to the WD repeat PROPPIN family.

It localises to the vacuole membrane. Its subcellular location is the cytoplasmic vesicle membrane. Involved in mitochondrial or peroxisomal functions and amino acid signaling pathways. This Emericella nidulans (strain FGSC A4 / ATCC 38163 / CBS 112.46 / NRRL 194 / M139) (Aspergillus nidulans) protein is SVP1-like protein 2 (hsv2).